Reading from the N-terminus, the 430-residue chain is Glutamate-1-semialdehyde 2,1-aminomutase (430 aa).

An N6-(pyridoxal phosphate)lysine modification is found at Lys-269.

It belongs to the class-III pyridoxal-phosphate-dependent aminotransferase family. HemL subfamily. Homodimer. The cofactor is pyridoxal 5'-phosphate.

It localises to the cytoplasm. The enzyme catalyses (S)-4-amino-5-oxopentanoate = 5-aminolevulinate. Its pathway is porphyrin-containing compound metabolism; protoporphyrin-IX biosynthesis; 5-aminolevulinate from L-glutamyl-tRNA(Glu): step 2/2. The polypeptide is Glutamate-1-semialdehyde 2,1-aminomutase (Desulfitobacterium hafniense (strain Y51)).